The sequence spans 385 residues: FK506-binding protein 5 (385 aa).

The 90-residue stretch at 26–115 (TNFVSVHYDA…RFEVELIGFW (90 aa)) folds into the PPIase FKBP-type domain. TPR repeat units follow at residues 128 to 161 (AEKK…IQDL), 177 to 210 (VSIQ…DMTK), and 211 to 244 (IKAY…AIGL).

It carries out the reaction [protein]-peptidylproline (omega=180) = [protein]-peptidylproline (omega=0). With respect to regulation, inhibited by both FK506 and rapamycin. Its function is as follows. PPIases accelerate the folding of proteins. It catalyzes the cis-trans isomerization of proline imidic peptide bonds in oligopeptides. This chain is FK506-binding protein 5 (FKBP5), found in Rhizopus delemar (strain RA 99-880 / ATCC MYA-4621 / FGSC 9543 / NRRL 43880) (Mucormycosis agent).